The sequence spans 42 residues: Hemoglobin subunit beta-A (42 aa).

The Globin domain maps to 2–42 (EWTDAERSAILSLWGKIDTDELGPALLARLXLVXXXTQRYF).

The protein belongs to the globin family. In terms of assembly, heterotetramer of two alpha chains and two beta chains. As to expression, red blood cells.

In terms of biological role, involved in oxygen transport from gills to the various peripheral tissues. This is Hemoglobin subunit beta-A from Catostomus clarkii (Desert sucker).